Here is a 193-residue protein sequence, read N- to C-terminus: Ion-translocating oxidoreductase complex subunit B (193 aa).

A hydrophobic region spans residues 1–26; it reads MSTMLIAVILLTLLALFFGVLLGFAA. One can recognise a 4Fe-4S domain in the interval 32 to 90; it reads EGNPIVDELEAILPQTQCGQCGYPGCRPYAEAIANGDKVNKCPPGGTATMEKLASLMGV. [4Fe-4S] cluster is bound by residues Cys-49, Cys-52, Cys-57, Cys-73, Cys-114, Cys-117, Cys-120, Cys-124, Cys-144, Cys-147, Cys-150, and Cys-154. 2 4Fe-4S ferredoxin-type domains span residues 105-134 and 136-164; these read KVAY…GAGK and MHTV…MLPV.

The protein belongs to the 4Fe4S bacterial-type ferredoxin family. RnfB subfamily. The complex is composed of six subunits: RnfA, RnfB, RnfC, RnfD, RnfE and RnfG. Requires [4Fe-4S] cluster as cofactor.

It localises to the cell inner membrane. In terms of biological role, part of a membrane-bound complex that couples electron transfer with translocation of ions across the membrane. In Shewanella sp. (strain MR-4), this protein is Ion-translocating oxidoreductase complex subunit B.